The following is a 128-amino-acid chain: Cytochrome c oxidase subunit 5B, mitochondrial (128 aa).

The N-terminal 30 residues, 1–30 (MKRGSAALEVRELKMQTPTASCVLSTQRAN), are a transit peptide targeting the mitochondrion. 2 positions are modified to N6-acetyllysine: Lys-67 and Lys-85. Positions 90, 92, 112, and 115 each coordinate Zn(2+). An N6-acetyllysine modification is found at Lys-120.

It belongs to the cytochrome c oxidase 5b family. In terms of tissue distribution, expressed in testis. Not expressed in brain, heart, liver, kidney, spleen, lung, duodenum, muscle, epididymis, vagina, uterus and ovary.

It is found in the mitochondrion inner membrane. This protein is one of the nuclear-coded polypeptide chains of cytochrome c oxidase, the terminal oxidase in mitochondrial electron transport. This is Cytochrome c oxidase subunit 5B, mitochondrial from Vulpes vulpes (Red fox).